The sequence spans 375 residues: Succinyl-diaminopimelate desuccinylase (375 aa).

Zn(2+) is bound at residue histidine 66. Aspartate 68 is a catalytic residue. A Zn(2+)-binding site is contributed by aspartate 99. Residue glutamate 133 is the Proton acceptor of the active site. Zn(2+) contacts are provided by glutamate 134, glutamate 162, and histidine 348.

The protein belongs to the peptidase M20A family. DapE subfamily. In terms of assembly, homodimer. The cofactor is Zn(2+). Co(2+) is required as a cofactor.

It carries out the reaction N-succinyl-(2S,6S)-2,6-diaminopimelate + H2O = (2S,6S)-2,6-diaminopimelate + succinate. It functions in the pathway amino-acid biosynthesis; L-lysine biosynthesis via DAP pathway; LL-2,6-diaminopimelate from (S)-tetrahydrodipicolinate (succinylase route): step 3/3. Functionally, catalyzes the hydrolysis of N-succinyl-L,L-diaminopimelic acid (SDAP), forming succinate and LL-2,6-diaminopimelate (DAP), an intermediate involved in the bacterial biosynthesis of lysine and meso-diaminopimelic acid, an essential component of bacterial cell walls. This is Succinyl-diaminopimelate desuccinylase from Salmonella choleraesuis (strain SC-B67).